Reading from the N-terminus, the 189-residue chain is Peptidyl-tRNA hydrolase (189 aa).

Tyr14 provides a ligand contact to tRNA. The Proton acceptor role is filled by His19. 3 residues coordinate tRNA: Tyr64, Asn66, and Asn112.

Belongs to the PTH family. As to quaternary structure, monomer.

The protein localises to the cytoplasm. The catalysed reaction is an N-acyl-L-alpha-aminoacyl-tRNA + H2O = an N-acyl-L-amino acid + a tRNA + H(+). In terms of biological role, hydrolyzes ribosome-free peptidyl-tRNAs (with 1 or more amino acids incorporated), which drop off the ribosome during protein synthesis, or as a result of ribosome stalling. Its function is as follows. Catalyzes the release of premature peptidyl moieties from peptidyl-tRNA molecules trapped in stalled 50S ribosomal subunits, and thus maintains levels of free tRNAs and 50S ribosomes. The protein is Peptidyl-tRNA hydrolase of Clostridium botulinum (strain ATCC 19397 / Type A).